We begin with the raw amino-acid sequence, 106 residues long: UPF0145 protein Pfl01_1745 (106 aa).

Belongs to the UPF0145 family.

This Pseudomonas fluorescens (strain Pf0-1) protein is UPF0145 protein Pfl01_1745.